The primary structure comprises 546 residues: Chaperonin GroEL (546 aa).

ATP contacts are provided by residues 30 to 33, K51, 87 to 91, G415, 479 to 481, and D495; these read TLGP, DGTTT, and NAA. The segment at 526–546 is disordered; that stretch reads KEDAPMPGGMPGGMGGMGMDM. The segment covering 534–546 has biased composition (gly residues); sequence GMPGGMGGMGMDM.

It belongs to the chaperonin (HSP60) family. Forms a cylinder of 14 subunits composed of two heptameric rings stacked back-to-back. Interacts with the co-chaperonin GroES.

The protein localises to the cytoplasm. The enzyme catalyses ATP + H2O + a folded polypeptide = ADP + phosphate + an unfolded polypeptide.. In terms of biological role, together with its co-chaperonin GroES, plays an essential role in assisting protein folding. The GroEL-GroES system forms a nano-cage that allows encapsulation of the non-native substrate proteins and provides a physical environment optimized to promote and accelerate protein folding. The chain is Chaperonin GroEL from Burkholderia cepacia (Pseudomonas cepacia).